The sequence spans 527 residues: GMP synthase [glutamine-hydrolyzing] (527 aa).

The 199-residue stretch at 4 to 202 folds into the Glutamine amidotransferase type-1 domain; sequence KILILDFGSQ…VLKICGAQPD (199 aa). Catalysis depends on Cys81, which acts as the Nucleophile. Active-site residues include His176 and Glu178. In terms of domain architecture, GMPS ATP-PPase spans 203-395; the sequence is WEMGHYIDEA…LGLPPAMVYR (193 aa). An ATP-binding site is contributed by 230–236; it reads SGGVDSS.

Homodimer.

The catalysed reaction is XMP + L-glutamine + ATP + H2O = GMP + L-glutamate + AMP + diphosphate + 2 H(+). It participates in purine metabolism; GMP biosynthesis; GMP from XMP (L-Gln route): step 1/1. Functionally, catalyzes the synthesis of GMP from XMP. The chain is GMP synthase [glutamine-hydrolyzing] from Paraburkholderia xenovorans (strain LB400).